We begin with the raw amino-acid sequence, 169 residues long: Biogenesis of lysosome-related organelles complex 1 subunit 4 (169 aa).

The protein belongs to the BLOC1S4 family. As to quaternary structure, component of the biogenesis of lysosome-related organelles complex-1 (BLOC-1) composed of Blos1, Blos2, Blos3, Blos4, Dysb, Muted, Pldn and Snapin. Interacts with Pldn.

In terms of biological role, component of the biogenesis of lysosome-related organelles complex-1 (BLOC-1) involved in pigment granule biogenesis. The polypeptide is Biogenesis of lysosome-related organelles complex 1 subunit 4 (Drosophila melanogaster (Fruit fly)).